The chain runs to 323 residues: Octaprenyl diphosphate synthase (323 aa).

3 residues coordinate isopentenyl diphosphate: Lys-45, Arg-48, and His-77. Residues Asp-84 and Asp-88 each contribute to the Mg(2+) site. Arg-93 is a binding site for an all-trans-polyprenyl diphosphate. Arg-94 contacts isopentenyl diphosphate. Residues Lys-170, Thr-171, and Gln-208 each contribute to the an all-trans-polyprenyl diphosphate site.

It belongs to the FPP/GGPP synthase family. Requires Mg(2+) as cofactor.

It carries out the reaction 5 isopentenyl diphosphate + (2E,6E)-farnesyl diphosphate = all-trans-octaprenyl diphosphate + 5 diphosphate. In terms of biological role, supplies octaprenyl diphosphate, the precursor for the side chain of the isoprenoid quinones ubiquinone and menaquinone. This chain is Octaprenyl diphosphate synthase (ispB), found in Escherichia coli (strain K12).